Consider the following 749-residue polypeptide: Chaperone protein DnaK 1 (749 aa).

Position 198 is a phosphothreonine; by autocatalysis (threonine 198). Basic and acidic residues-rich tracts occupy residues 643 to 653, 661 to 694, and 711 to 724; these read RWDADPWDRSR, YDDRRSPVSDPYRGERWVEEQTSMSRREPVRDRN, and PTWEEDQPPRRDRS. Residues 643–749 form a disordered region; that stretch reads RWDADPWDRS…GWDDDDDEWF (107 aa). Residues 740–749 are compositionally biased toward acidic residues; that stretch reads GWDDDDDEWF.

The protein belongs to the heat shock protein 70 family.

Its function is as follows. Acts as a chaperone. The polypeptide is Chaperone protein DnaK 1 (Synechococcus sp. (strain ATCC 27144 / PCC 6301 / SAUG 1402/1) (Anacystis nidulans)).